The chain runs to 247 residues: tRNA pseudouridine synthase A 1 (247 aa).

Catalysis depends on Asp-53, which acts as the Nucleophile. Tyr-111 provides a ligand contact to substrate.

It belongs to the tRNA pseudouridine synthase TruA family. In terms of assembly, homodimer.

It carries out the reaction uridine(38/39/40) in tRNA = pseudouridine(38/39/40) in tRNA. Formation of pseudouridine at positions 38, 39 and 40 in the anticodon stem and loop of transfer RNAs. This chain is tRNA pseudouridine synthase A 1, found in Bacillus cereus (strain ATCC 10987 / NRS 248).